Consider the following 488-residue polypeptide: GTPase Der (488 aa).

EngA-type G domains are found at residues 3–166 and 199–372; these read PVVA…AEAM and IKLA…DSAT. GTP is bound by residues 9–16, 56–60, 118–121, 205–212, 252–256, and 317–320; these read GRPNVGKS, DTGGI, NKID, GKPNVGKS, DTAGV, and NKWD. In terms of domain architecture, KH-like spans 373 to 457; the sequence is RRVSTSMLTR…PIQLRFQEGD (85 aa).

It belongs to the TRAFAC class TrmE-Era-EngA-EngB-Septin-like GTPase superfamily. EngA (Der) GTPase family. As to quaternary structure, associates with the 50S ribosomal subunit.

GTPase that plays an essential role in the late steps of ribosome biogenesis. This Shewanella sp. (strain ANA-3) protein is GTPase Der.